The primary structure comprises 491 residues: Argininosuccinate lyase (491 aa).

Belongs to the lyase 1 family. Argininosuccinate lyase subfamily.

It is found in the cytoplasm. The enzyme catalyses 2-(N(omega)-L-arginino)succinate = fumarate + L-arginine. It functions in the pathway amino-acid biosynthesis; L-arginine biosynthesis; L-arginine from L-ornithine and carbamoyl phosphate: step 3/3. This chain is Argininosuccinate lyase, found in Methanosarcina acetivorans (strain ATCC 35395 / DSM 2834 / JCM 12185 / C2A).